A 478-amino-acid polypeptide reads, in one-letter code: Aspartyl/glutamyl-tRNA(Asn/Gln) amidotransferase subunit B (478 aa).

This sequence belongs to the GatB/GatE family. GatB subfamily. In terms of assembly, heterotrimer of A, B and C subunits.

It carries out the reaction L-glutamyl-tRNA(Gln) + L-glutamine + ATP + H2O = L-glutaminyl-tRNA(Gln) + L-glutamate + ADP + phosphate + H(+). The enzyme catalyses L-aspartyl-tRNA(Asn) + L-glutamine + ATP + H2O = L-asparaginyl-tRNA(Asn) + L-glutamate + ADP + phosphate + 2 H(+). In terms of biological role, allows the formation of correctly charged Asn-tRNA(Asn) or Gln-tRNA(Gln) through the transamidation of misacylated Asp-tRNA(Asn) or Glu-tRNA(Gln) in organisms which lack either or both of asparaginyl-tRNA or glutaminyl-tRNA synthetases. The reaction takes place in the presence of glutamine and ATP through an activated phospho-Asp-tRNA(Asn) or phospho-Glu-tRNA(Gln). In Brevibacillus brevis (strain 47 / JCM 6285 / NBRC 100599), this protein is Aspartyl/glutamyl-tRNA(Asn/Gln) amidotransferase subunit B.